We begin with the raw amino-acid sequence, 804 residues long: Enhancer of polycomb homolog 2 (804 aa).

Disordered regions lie at residues Gln372–Pro395, Gly484–Cys508, Gln603–Met624, and Pro646–Ser669. Composition is skewed to polar residues over residues Ser611–Met624 and Asp654–Ser669.

Belongs to the enhancer of polycomb family.

The protein localises to the nucleus. Functionally, may play a role in transcription or DNA repair. The sequence is that of Enhancer of polycomb homolog 2 (epc2) from Xenopus laevis (African clawed frog).